A 189-amino-acid polypeptide reads, in one-letter code: Probable nicotinate-nucleotide adenylyltransferase (189 aa).

This sequence belongs to the NadD family.

It catalyses the reaction nicotinate beta-D-ribonucleotide + ATP + H(+) = deamido-NAD(+) + diphosphate. It participates in cofactor biosynthesis; NAD(+) biosynthesis; deamido-NAD(+) from nicotinate D-ribonucleotide: step 1/1. In terms of biological role, catalyzes the reversible adenylation of nicotinate mononucleotide (NaMN) to nicotinic acid adenine dinucleotide (NaAD). In Bacillus licheniformis (strain ATCC 14580 / DSM 13 / JCM 2505 / CCUG 7422 / NBRC 12200 / NCIMB 9375 / NCTC 10341 / NRRL NRS-1264 / Gibson 46), this protein is Probable nicotinate-nucleotide adenylyltransferase.